We begin with the raw amino-acid sequence, 132 residues long: Small ribosomal subunit protein uS9 (132 aa).

This sequence belongs to the universal ribosomal protein uS9 family.

The polypeptide is Small ribosomal subunit protein uS9 (Baumannia cicadellinicola subsp. Homalodisca coagulata).